The sequence spans 353 residues: Protein RecA (353 aa).

68–75 lines the ATP pocket; the sequence is GPESSGKT.

This sequence belongs to the RecA family.

It is found in the cytoplasm. Its function is as follows. Can catalyze the hydrolysis of ATP in the presence of single-stranded DNA, the ATP-dependent uptake of single-stranded DNA by duplex DNA, and the ATP-dependent hybridization of homologous single-stranded DNAs. It interacts with LexA causing its activation and leading to its autocatalytic cleavage. This Roseiflexus sp. (strain RS-1) protein is Protein RecA.